An 804-amino-acid chain; its full sequence is DNA mismatch repair protein MutS (804 aa).

614–621 (GPNMAGKS) lines the ATP pocket.

This sequence belongs to the DNA mismatch repair MutS family.

Its function is as follows. This protein is involved in the repair of mismatches in DNA. It is possible that it carries out the mismatch recognition step. This protein has a weak ATPase activity. In Ehrlichia ruminantium (strain Gardel), this protein is DNA mismatch repair protein MutS.